The following is a 442-amino-acid chain: Mannosylglycerate hydrolase (442 aa).

Residues tyrosine 38, 42-45 (WSWD), tyrosine 90, glutamine 116, and glycine 176 each bind substrate. The active-site Proton donor is aspartate 178. Residues arginine 213 and 369–370 (YW) contribute to the substrate site. Residue glutamate 413 is the Proton acceptor of the active site.

This sequence belongs to the glycosyl hydrolase 63 family. As to quaternary structure, homodimer in solution.

It carries out the reaction (2R)-2-O-(alpha-D-mannosyl)-glycerate + H2O = D-mannose + (R)-glycerate. The catalysed reaction is (2R)-2-O-(alpha-D-glucopyranosyl)-glycerate + H2O = (R)-glycerate + D-glucose. Activity is not stimulated by divalent cations and not affected in the presence of EDTA. Its function is as follows. Hydrolase that catalyzes the hydrolysis of mannosylglycerate (MG), a solute produced in response to osmotic stress in thermophiles, into mannose and glycerate. Can also hydrolyze glucosylglycerate (GG) to glucose and glycerate, with similar catalytic efficiency. Is highly specific for MG and GG, and cannot use mannosylglyceramide (MGA), glucosylglycerol, mannosylglucosylglycerate (MGG), glucosylglucosylglycerate (GGG) or trehalose as substrates. The chain is Mannosylglycerate hydrolase from Rubrobacter radiotolerans (Arthrobacter radiotolerans).